Here is a 311-residue protein sequence, read N- to C-terminus: Avirulence protein ATR1 (311 aa).

The first 15 residues, 1 to 15 (MRVCYFVLVPSVALA), serve as a signal peptide directing secretion. The RxLR-dEER signature appears at 48–62 (RALRAQTALDDDEER). WY domain stretches follow at residues 127-209 (DEAL…VKCV) and 210-311 (ESED…IYSV).

It belongs to the RxLR effector family. Monomer. Interacts with defense protein RPP1 from several ecotypes including RPP1-NdA, RPP1-WsB, RPP1-EstA and RPP1-ZdrA, via their leucine-rich repeats (LLRs).

It is found in the secreted. Its subcellular location is the host cytoplasm. Its function is as follows. Secreted effector that acts as an elicitor of hypersensitive response (HR) specifically on plants carrying both defense protein RPP1 from several ecotypes including RPP1-NdA, RPP1-WsB, RPP1-EstA and RPP1-ZdrA. The sequence is that of Avirulence protein ATR1 from Hyaloperonospora arabidopsidis (strain Emoy2) (Downy mildew agent).